Consider the following 629-residue polypeptide: tRNA uridine 5-carboxymethylaminomethyl modification enzyme MnmG (629 aa).

An FAD-binding site is contributed by 11-16; that stretch reads GGGHAG. Residue 273–287 participates in NAD(+) binding; that stretch reads GPRYCPSFEDKVVRF.

Belongs to the MnmG family. As to quaternary structure, homodimer. Heterotetramer of two MnmE and two MnmG subunits. FAD is required as a cofactor.

It localises to the cytoplasm. Its function is as follows. NAD-binding protein involved in the addition of a carboxymethylaminomethyl (cmnm) group at the wobble position (U34) of certain tRNAs, forming tRNA-cmnm(5)s(2)U34. This is tRNA uridine 5-carboxymethylaminomethyl modification enzyme MnmG from Mycoplasma capricolum subsp. capricolum (strain California kid / ATCC 27343 / NCTC 10154).